The following is a 601-amino-acid chain: DNA replication licensing factor MCM3 (601 aa).

The region spanning 180 to 386 (PINLLSKSIA…LDRRLSQHVL (207 aa)) is the MCM domain. Position 229 to 236 (229 to 236 (GDPSTAKS)) interacts with ATP. An Arginine finger motif is present at residues 361-364 (SRFD).

It belongs to the MCM family. In terms of assembly, component of the MCM2-7 complex.

The protein localises to the nucleus. It is found in the chromosome. It localises to the nucleoplasm. The enzyme catalyses ATP + H2O = ADP + phosphate + H(+). In terms of biological role, acts as a component of the MCM2-7 complex (MCM complex) which is the replicative helicase essential for DNA replication initiation and elongation in eukaryotic cells. Required for DNA replication and cell proliferation. The active ATPase sites in the MCM2-7 ring are formed through the interaction surfaces of two neighboring subunits such that a critical structure of a conserved arginine finger motif is provided in trans relative to the ATP-binding site of the Walker A box of the adjacent subunit. The polypeptide is DNA replication licensing factor MCM3 (Entamoeba histolytica (strain ATCC 30459 / HM-1:IMSS / ABRM)).